A 282-amino-acid chain; its full sequence is Protein N-terminal and lysine N-methyltransferase efm7 (282 aa).

Residues 1 to 13 (MSKPEEVVNHVPE) show a composition bias toward basic and acidic residues. The disordered stretch occupies residues 1–32 (MSKPEEVVNHVPEDEGSDIEAGGLFEDPPDFY). S-adenosyl-L-methionine-binding positions include Trp67, 93 to 95 (GAA), Asp115, Trp152, and Ala179.

The protein belongs to the class I-like SAM-binding methyltransferase superfamily. EFM7 family.

The protein resides in the cytoplasm. Functionally, S-adenosyl-L-methionine-dependent protein methyltransferase that trimethylates the N-terminal glycine 'Gly-2' of elongation factor 1-alpha, before also catalyzing the mono- and dimethylation of 'Lys-3'. This is Protein N-terminal and lysine N-methyltransferase efm7 (nnt-1) from Neurospora crassa (strain ATCC 24698 / 74-OR23-1A / CBS 708.71 / DSM 1257 / FGSC 987).